Here is a 338-residue protein sequence, read N- to C-terminus: tRNA N6-adenosine threonylcarbamoyltransferase (338 aa).

Fe cation contacts are provided by histidine 112 and histidine 116. Substrate-binding positions include 135–139, aspartate 168, glycine 181, and asparagine 273; that span reads LVSGG. Position 301 (aspartate 301) interacts with Fe cation.

The protein belongs to the KAE1 / TsaD family. Fe(2+) serves as cofactor.

It localises to the cytoplasm. It carries out the reaction L-threonylcarbamoyladenylate + adenosine(37) in tRNA = N(6)-L-threonylcarbamoyladenosine(37) in tRNA + AMP + H(+). Functionally, required for the formation of a threonylcarbamoyl group on adenosine at position 37 (t(6)A37) in tRNAs that read codons beginning with adenine. Is involved in the transfer of the threonylcarbamoyl moiety of threonylcarbamoyl-AMP (TC-AMP) to the N6 group of A37, together with TsaE and TsaB. TsaD likely plays a direct catalytic role in this reaction. In Buchnera aphidicola subsp. Baizongia pistaciae (strain Bp), this protein is tRNA N6-adenosine threonylcarbamoyltransferase.